We begin with the raw amino-acid sequence, 312 residues long: Putative electron transfer flavoprotein subunit YdiR (312 aa).

FAD is bound at residue 254–282; that stretch reads LYLTLGISGQIQHMVGGNGAKVIVAINKD.

Belongs to the ETF alpha-subunit/FixB family. As to quaternary structure, ydiR and YdiQ form a heterodimer.

Functionally, may play a role in a redox process. This chain is Putative electron transfer flavoprotein subunit YdiR (ydiR), found in Escherichia coli (strain K12).